Here is a 516-residue protein sequence, read N- to C-terminus: MSSKVIIFDTTLRDGEQALQASLSVKEKLQIALSLEKCGIDIIEVGFPISSPGDFKSVQTISKKIKNSRICSLARCVEKDIEVAGDAMSSSDFFRIHIFLATSTLHMESKLRKNFDEIIDMAVSSVKKALRYTDDVEFSCEDASRTTMDNLCRIVEKLIKAGVKTINIPDTVGYTIPNELSNIIKNLFERVPNIHKSIISVHCHNDLGMAVGNSISAIQAGARQIEGTINGIGERAGNTALEEIIMAIKVREDILGVSTNIVHKEIYRTSQIISQICNMPIPANKAIVGSNAFAHSSGIHQDGVLKNRKNYEIMEPNTIGVKEVKLNLTSRSGRAAVKYYMDKMGYKDDDYDIDELYSAFLKLADKKGQVFDYDLEALAIFSKKQENAEYFYLKFFSVQSISNGLSTASVKLKCGKKVYTESSTTSNGPVDATYQALNKIINFPITLQKFQLVAKGKGKDALGQVDILVKYENRQFHGIGLATDIIESSAQAMINVLNNIWKSQQVNKKLKNLKKY.

The Pyruvate carboxyltransferase domain occupies 5-267 (VIIFDTTLRD…STNIVHKEIY (263 aa)). The Mn(2+) site is built by D14, H202, H204, and N238. The tract at residues 392 to 516 (YLKFFSVQSI…NKKLKNLKKY (125 aa)) is regulatory domain.

The protein belongs to the alpha-IPM synthase/homocitrate synthase family. LeuA type 1 subfamily. In terms of assembly, homodimer. Mn(2+) serves as cofactor.

The protein resides in the cytoplasm. The enzyme catalyses 3-methyl-2-oxobutanoate + acetyl-CoA + H2O = (2S)-2-isopropylmalate + CoA + H(+). It functions in the pathway amino-acid biosynthesis; L-leucine biosynthesis; L-leucine from 3-methyl-2-oxobutanoate: step 1/4. Functionally, catalyzes the condensation of the acetyl group of acetyl-CoA with 3-methyl-2-oxobutanoate (2-ketoisovalerate) to form 3-carboxy-3-hydroxy-4-methylpentanoate (2-isopropylmalate). The sequence is that of 2-isopropylmalate synthase from Buchnera aphidicola subsp. Diuraphis noxia.